The sequence spans 341 residues: Adhesion protein Bd37 (341 aa).

A signal peptide spans 1-21 (MKTSKILNTAAICLLAMGFNG). N-linked (GlcNAc...) asparagine glycans are attached at residues asparagine 23 and asparagine 30. Cysteine 26 and cysteine 307 form a disulfide bridge. Residues 36-75 (AAANPVVSTPGNDAQQAGTQQGGANSKSVPEQQPQQAAGE) form a disordered region. Residues 49–59 (AQQAGTQQGGA) show a composition bias toward low complexity. Residues 60–75 (NSKSVPEQQPQQAAGE) show a composition bias toward polar residues. Serine 311 is lipidated: GPI-anchor amidated serine. The propeptide at 312-341 (GQGSSPKKPSFAAVPSSLSAIVFGIIVSMF) is removed in mature form.

In terms of processing, the signal sequence is cleaved. Post-translationally, glycosylated. Palmitoylated. In terms of processing, not myristoylated.

It localises to the cell membrane. The protein localises to the secreted. It is found in the vesicle. In terms of biological role, binds to host erythrocytes. This chain is Adhesion protein Bd37, found in Babesia divergens.